Here is a 417-residue protein sequence, read N- to C-terminus: Lysosome-associated membrane glycoprotein 1 (417 aa).

Positions 1-28 are cleaved as a signal peptide; that stretch reads MAAPGSARRPLLLLLLLLLLGLMHCASA. The segment at 29–194 is first lumenal domain; that stretch reads AMFMVKNGNG…SRGETRCEQD (166 aa). Topologically, residues 29-382 are lumenal; that stretch reads AMFMVKNGNG…EECLLDENSM (354 aa). N-linked (GlcNAc...) asparagine glycosylation is found at Asn-37 and Asn-45. Residues Cys-41 and Cys-80 are joined by a disulfide bond. N-linked (GlcNAc...) (polylactosaminoglycan) asparagine glycosylation occurs at Asn-62. Residues Asn-76, Asn-84, Asn-103, and Asn-107 are each glycosylated (N-linked (GlcNAc...) asparagine). 2 N-linked (GlcNAc...) (polylactosaminoglycan) asparagine glycosylation sites follow: Asn-121 and Asn-130. Cys-155 and Cys-191 are joined by a disulfide. Asn-165 and Asn-181 each carry an N-linked (GlcNAc...) asparagine glycan. A disordered region spans residues 184–221; it reads FSRGETRCEQDRPSPTTAPPAPPSPSPSPVPKSPSVDK. The hinge stretch occupies residues 195–227; sequence RPSPTTAPPAPPSPSPSPVPKSPSVDKYNVSGT. Ser-197 is a glycosylation site (O-linked (GalNAc...) serine; partial). O-linked (GalNAc...) threonine glycosylation is found at Thr-199 and Thr-200. A compositionally biased stretch (pro residues) spans 199-215; sequence TTAPPAPPSPSPSPVPK. Residues Ser-207, Ser-209, and Ser-211 are each glycosylated (O-linked (GalNAc...) serine). Asn-223 and Asn-228 each carry an N-linked (GlcNAc...) (polylactosaminoglycan) asparagine glycan. The segment at 228-382 is second lumenal domain; that stretch reads NGTCLLASMG…EECLLDENSM (155 aa). The cysteines at positions 231 and 269 are disulfide-linked. Asn-241, Asn-249, Asn-261, Asn-293, and Asn-322 each carry an N-linked (GlcNAc...) asparagine glycan. Cys-338 and Cys-375 are oxidised to a cystine. Residues 383–410 traverse the membrane as a helical segment; that stretch reads LIPIAVGGALAGLVLIVLIAYLVGRKRS. Residues 411 to 417 lie on the Cytoplasmic side of the membrane; sequence HAGYQTI.

This sequence belongs to the LAMP family. As to quaternary structure, interacts with ABCB9; this interaction strongly stabilizes ABCB9 and protects ABCB9 against lysosomal degradation. Interacts with FURIN. Interacts with TMEM175; inhibiting the proton channel activity of TMEM175. (Microbial infection) Interacts with Lassa virus protein glycoprotein. In terms of assembly, (Microbial infection) Interacts with mumps virus protein F; this interaction promotes protein F cleavage by FURIN. Post-translationally, O- and N-glycosylated; some of the 18 N-linked glycans are polylactosaminoglycans. In terms of processing, (Microbial infection) The glycosylation of Asn-76 is essential for Lassa virus entry into cells.

Its subcellular location is the lysosome membrane. It is found in the endosome membrane. The protein resides in the late endosome membrane. It localises to the cell membrane. The protein localises to the cytolytic granule membrane. Functionally, lysosomal membrane glycoprotein which plays an important role in lysosome biogenesis, lysosomal pH regulation, autophagy and cholesterol homeostasis. Acts as an important regulator of lysosomal lumen pH regulation by acting as a direct inhibitor of the proton channel TMEM175, facilitating lysosomal acidification for optimal hydrolase activity. Also plays an important role in NK-cells cytotoxicity. Mechanistically, participates in cytotoxic granule movement to the cell surface and perforin trafficking to the lytic granule. In addition, protects NK-cells from degranulation-associated damage induced by their own cytotoxic granule content. Presents carbohydrate ligands to selectins. Its function is as follows. (Microbial infection) Acts as a receptor for Lassa virus glycoprotein. Also promotes fusion of the virus with host membrane in less acidic endosomes. In terms of biological role, (Microbial infection) Supports the FURIN-mediated cleavage of mumps virus fusion protein F by interacting with both FURIN and the unprocessed form but not the processed form of the viral protein F. This Homo sapiens (Human) protein is Lysosome-associated membrane glycoprotein 1.